Consider the following 313-residue polypeptide: Aspartate carbamoyltransferase catalytic subunit (313 aa).

Carbamoyl phosphate-binding residues include R51 and T52. K80 provides a ligand contact to L-aspartate. The carbamoyl phosphate site is built by R101, H129, and Q132. The L-aspartate site is built by R162 and R224. Residues L263 and P264 each coordinate carbamoyl phosphate.

This sequence belongs to the aspartate/ornithine carbamoyltransferase superfamily. ATCase family. Heterododecamer (2C3:3R2) of six catalytic PyrB chains organized as two trimers (C3), and six regulatory PyrI chains organized as three dimers (R2).

The catalysed reaction is carbamoyl phosphate + L-aspartate = N-carbamoyl-L-aspartate + phosphate + H(+). Its pathway is pyrimidine metabolism; UMP biosynthesis via de novo pathway; (S)-dihydroorotate from bicarbonate: step 2/3. Catalyzes the condensation of carbamoyl phosphate and aspartate to form carbamoyl aspartate and inorganic phosphate, the committed step in the de novo pyrimidine nucleotide biosynthesis pathway. The chain is Aspartate carbamoyltransferase catalytic subunit from Bacteroides thetaiotaomicron (strain ATCC 29148 / DSM 2079 / JCM 5827 / CCUG 10774 / NCTC 10582 / VPI-5482 / E50).